The sequence spans 212 residues: uncharacterized protein (212 aa).

The helical transmembrane segment at 11–31 (NLIFFQFIVYFFFISLTILII) threads the bilayer.

The protein localises to the membrane. This is an uncharacterized protein from Rickettsia prowazekii (strain Madrid E).